The primary structure comprises 473 residues: MAVKKYEAGVKEYRQTYWAPEYVPLDSDILACFKITPQPGVDREEAAAAVAAESSTGTWTTVWTDLLTDMDYYKGRAYRIEDVPGDDTSFYAFIAYPIDLFEEGSVVNVFTSLVGNVFGFKAVRALRLEDVRFPLAYVKTCNGPPHGIQVERDKMNKYGRPMLGCTIKPKLGLSAKNYGRAVYECLRGGLDFTKDDENVNSQPFMRWRDRFLFVADAIHTAEAETGERKGHYLNVTAPSPEEMYERAEFAKELNMPIIMHDFLTGGFCANTGLARWCRKTGTLLHIHRAMHAVVDRNPHHGIHFRVLVKALRLSGGDHLHTGTVVGKLEGDRASTQGWVDLLRESFVPEDRSRGIFFDQDWGSMPGVFAVASGGIHVWHMPSLLAIFGDDAVFQFGGGTLGHPWGNAAGAAANRVALEACVEARNEGRDLEREGKDILTNAAKDSPELKIALETWKEIKFEFDTVDKLDVVNR.

The substrate site is built by Asn116 and Thr166. Lys168 acts as the Proton acceptor in catalysis. Residue Lys170 coordinates substrate. Lys194, Asp196, and Glu197 together coordinate Mg(2+). The residue at position 194 (Lys194) is an N6-carboxylysine. His287 (proton acceptor) is an active-site residue. Substrate-binding residues include Arg288, His320, and Ser372.

It belongs to the RuBisCO large chain family. Type I subfamily. Heterohexadecamer of 8 large chains and 8 small chains. Mg(2+) is required as a cofactor.

It carries out the reaction 2 (2R)-3-phosphoglycerate + 2 H(+) = D-ribulose 1,5-bisphosphate + CO2 + H2O. The catalysed reaction is D-ribulose 1,5-bisphosphate + O2 = 2-phosphoglycolate + (2R)-3-phosphoglycerate + 2 H(+). RuBisCO catalyzes two reactions: the carboxylation of D-ribulose 1,5-bisphosphate, the primary event in carbon dioxide fixation, as well as the oxidative fragmentation of the pentose substrate. Both reactions occur simultaneously and in competition at the same active site. The sequence is that of Ribulose bisphosphate carboxylase large chain 1 from Acidithiobacillus ferrooxidans (strain ATCC 23270 / DSM 14882 / CIP 104768 / NCIMB 8455) (Ferrobacillus ferrooxidans (strain ATCC 23270)).